Reading from the N-terminus, the 465-residue chain is Cysteine--tRNA ligase (465 aa).

Cys-27 is a Zn(2+) binding site. A 'HIGH' region motif is present at residues 29–39 (PTVYDDAHLGH). Zn(2+)-binding residues include Cys-207, His-237, and Glu-241. Residues 269-273 (KMSKS) carry the 'KMSKS' region motif. Position 272 (Lys-272) interacts with ATP.

This sequence belongs to the class-I aminoacyl-tRNA synthetase family. Monomer. Zn(2+) serves as cofactor.

It localises to the cytoplasm. It catalyses the reaction tRNA(Cys) + L-cysteine + ATP = L-cysteinyl-tRNA(Cys) + AMP + diphosphate. This chain is Cysteine--tRNA ligase, found in Helicobacter pylori (strain P12).